The sequence spans 122 residues: Large ribosomal subunit protein uL14 (122 aa).

It belongs to the universal ribosomal protein uL14 family. Part of the 50S ribosomal subunit. Forms a cluster with proteins L3 and L19. In the 70S ribosome, L14 and L19 interact and together make contacts with the 16S rRNA in bridges B5 and B8.

Binds to 23S rRNA. Forms part of two intersubunit bridges in the 70S ribosome. This chain is Large ribosomal subunit protein uL14, found in Nitrosomonas eutropha (strain DSM 101675 / C91 / Nm57).